Here is a 330-residue protein sequence, read N- to C-terminus: Ribosomal RNA small subunit methyltransferase H (330 aa).

S-adenosyl-L-methionine contacts are provided by residues 40–42 (GGY), Asp58, Phe85, Asp101, and Gln108.

It belongs to the methyltransferase superfamily. RsmH family.

The protein resides in the cytoplasm. It catalyses the reaction cytidine(1402) in 16S rRNA + S-adenosyl-L-methionine = N(4)-methylcytidine(1402) in 16S rRNA + S-adenosyl-L-homocysteine + H(+). Specifically methylates the N4 position of cytidine in position 1402 (C1402) of 16S rRNA. This chain is Ribosomal RNA small subunit methyltransferase H, found in Roseobacter denitrificans (strain ATCC 33942 / OCh 114) (Erythrobacter sp. (strain OCh 114)).